Here is a 1092-residue protein sequence, read N- to C-terminus: Myelin regulatory factor (1092 aa).

The Cytoplasmic segment spans residues 1–730 (MDVEDENETL…CVSQRFLQAT (730 aa)). Disordered stretches follow at residues 145–168 (SYAA…PQQL), 187–210 (PPSR…SIHQ), and 258–282 (QQHG…TNTL). Pro residues predominate over residues 196–205 (PPHLQGPLPP). The segment at residues 246 to 507 (AQQSQMLHQL…SNPGQFESDS (262 aa)) is a DNA-binding region (NDT80). The 110-residue stretch at 553–662 (SDIRAKESVE…KLTDNLETRI (110 aa)) folds into the Peptidase S74 domain. The stretch at 646–677 (GAVKELCKLTDNLETRIDELERWSHKLAKLRR) forms a coiled coil. Residues 681–695 (MKSTNSHTGSSQFSR) are compositionally biased toward polar residues. Positions 681–714 (MKSTNSHTGSSQFSRAGSVPYKQRPPKVMGKTVP) are disordered. A helical membrane pass occupies residues 731–751 (IIALVIIMAFSVISMTTLYVL). The Lumenal segment spans residues 752 to 1092 (NLRSEDDMLG…YYFRFYRLCD (341 aa)). Disordered stretches follow at residues 798–817 (TTQL…SPDW) and 849–945 (ITRK…DSRY). 2 stretches are compositionally biased toward polar residues: residues 849 to 867 (ITRK…TDPA) and 928 to 945 (TPIT…DSRY). N-linked (GlcNAc...) asparagine glycosylation is found at asparagine 941, asparagine 961, asparagine 974, and asparagine 996.

It belongs to the MRF family. Homotrimer. Follows autocatalytic cleavage via the peptidase S74 domain. Autoprocessing is apparently constitutive and is essential for transcriptional activity.

The protein localises to the endoplasmic reticulum membrane. The protein resides in the nucleus. It localises to the cytoplasm. In terms of biological role, constitutes a precursor of the transcription factor. Mediates the autocatalytic cleavage that releases the Myelin regulatory factor, N-terminal component that specifically activates transcription of central nervous system (CNS) myelin genes. Membrane-bound part that has no transcription factor activity and remains attached to the endoplasmic reticulum membrane following cleavage. Its function is as follows. Transcription factor that specifically activates expression of myelin genes during oligodendrocyte (OL) maturation, thereby playing a central role in oligodendrocyte maturation and CNS myelination. This is Myelin regulatory factor (myrf) from Xenopus laevis (African clawed frog).